Reading from the N-terminus, the 563-residue chain is MDYKNLVAERIKENTELEVDLIEKLIEIPPKKDMGDYAFPCFQLAKTFRKAPNLIAEELKEKINKEGFEKVVTVGPYLNFFVDKTVLIKDVLEKVLNEKEKYGSSKVGEGKNVVVEYSSPNIAKPFHIGHLFTTAIGNALYKILSFEGYNCIGINHLGDWGTQFGKLISAYRRWVDEEALEKDAIGELLRIYVKFHEEAEKNPELEKEARLNFKKLEDGSEEETELWNRFKDLSLKEFNKVYDMLGIKFDSLAGESFYSDKMDAVVQEIDDKGLLVDSNGAKVVMLDDYNMPPCMIKKSDGATIYATRDLAAAMYRKKTYDFHKCIYVVGTPQALHFKQVFTTLKLMGHDWADDCKHVGFGLVKLANKKLSTRNGDVVFLEDLLNQSVEETLKIINEKNPNLKDKEGTAKKLGIGAVVFTYLKNNRERDIVFDWKEILSFDGETGPYVEYSYARGKSILRKAGELTGEADYSKLSSKEEFELAKLLGGFNDAIMNAIDKLEPAMVTRYVIEVAKAFNKFYNAHGILNAEDNDVKLARVKLVEATCQVIKNALNLLGIDVVEEM.

The 'HIGH' region signature appears at Pro-120–His-130.

The protein belongs to the class-I aminoacyl-tRNA synthetase family. In terms of assembly, monomer.

Its subcellular location is the cytoplasm. It carries out the reaction tRNA(Arg) + L-arginine + ATP = L-arginyl-tRNA(Arg) + AMP + diphosphate. This is Arginine--tRNA ligase from Clostridium botulinum (strain Loch Maree / Type A3).